Consider the following 220-residue polypeptide: Glycerol-3-phosphate acyltransferase (220 aa).

The next 6 membrane-spanning stretches (helical) occupy residues 11-31, 70-90, 96-116, 127-147, 153-173, and 192-212; these read INVI…GYAL, LLVL…SKLF, LQWM…FLNF, GSVV…WFFV, ISSL…FFVP, and PMVL…FNLL.

It belongs to the PlsY family. In terms of assembly, probably interacts with PlsX.

It localises to the cell inner membrane. The catalysed reaction is an acyl phosphate + sn-glycerol 3-phosphate = a 1-acyl-sn-glycero-3-phosphate + phosphate. It functions in the pathway lipid metabolism; phospholipid metabolism. Catalyzes the transfer of an acyl group from acyl-phosphate (acyl-PO(4)) to glycerol-3-phosphate (G3P) to form lysophosphatidic acid (LPA). This enzyme utilizes acyl-phosphate as fatty acyl donor, but not acyl-CoA or acyl-ACP. The protein is Glycerol-3-phosphate acyltransferase of Helicobacter pylori (strain J99 / ATCC 700824) (Campylobacter pylori J99).